The sequence spans 607 residues: Type 3 secretion system secretin (607 aa).

A signal peptide spans 1-33; that stretch reads MAPACTTAHRRRAPLAAVLMLSLLPLLSPHADA. The segment at 277-332 is disordered; that stretch reads ASSSDRVPVSPPLPGSGAAAAAGSPASVWPELSKGRRDESNPIDAGGGAELASDAP. Over residues 291 to 306 the composition is skewed to low complexity; it reads GSGAAAAAGSPASVWP.

Belongs to the bacterial secretin family. T3SS SctC subfamily. The core secretion machinery of the T3SS is composed of approximately 20 different proteins, including cytoplasmic components, a base, an export apparatus and a needle. This subunit is part of the base, which anchors the injectisome in the bacterial cell envelope. Forms a stable homooligomeric complex.

Its subcellular location is the cell outer membrane. Its function is as follows. Component of the type III secretion system (T3SS), also called injectisome, which is used to inject bacterial effector proteins into eukaryotic host cells. Forms a ring-shaped multimeric structure with an apparent central pore in the outer membrane. Necessary for both basic pathogenicity and the induction of the hypersensitive response in resistant plants. This chain is Type 3 secretion system secretin, found in Xanthomonas euvesicatoria.